We begin with the raw amino-acid sequence, 305 residues long: UDP-3-O-acyl-N-acetylglucosamine deacetylase (305 aa).

3 residues coordinate Zn(2+): H79, H238, and D242. H265 serves as the catalytic Proton donor.

The protein belongs to the LpxC family. It depends on Zn(2+) as a cofactor.

It carries out the reaction a UDP-3-O-[(3R)-3-hydroxyacyl]-N-acetyl-alpha-D-glucosamine + H2O = a UDP-3-O-[(3R)-3-hydroxyacyl]-alpha-D-glucosamine + acetate. It participates in glycolipid biosynthesis; lipid IV(A) biosynthesis; lipid IV(A) from (3R)-3-hydroxytetradecanoyl-[acyl-carrier-protein] and UDP-N-acetyl-alpha-D-glucosamine: step 2/6. Functionally, catalyzes the hydrolysis of UDP-3-O-myristoyl-N-acetylglucosamine to form UDP-3-O-myristoylglucosamine and acetate, the committed step in lipid A biosynthesis. The chain is UDP-3-O-acyl-N-acetylglucosamine deacetylase from Haemophilus influenzae (strain 86-028NP).